Reading from the N-terminus, the 156-residue chain is Putative pre-16S rRNA nuclease (156 aa).

It belongs to the YqgF nuclease family.

The protein localises to the cytoplasm. Functionally, could be a nuclease involved in processing of the 5'-end of pre-16S rRNA. This chain is Putative pre-16S rRNA nuclease, found in Aromatoleum aromaticum (strain DSM 19018 / LMG 30748 / EbN1) (Azoarcus sp. (strain EbN1)).